Reading from the N-terminus, the 360-residue chain is Photosystem II protein D1 3 (360 aa).

Transmembrane regions (helical) follow at residues 29 to 46, 118 to 133, and 142 to 156; these read YVGW…AATV, HFLI…QWEL, and WICV…SATA. His-118 is a chlorophyll a binding site. Tyr-126 provides a ligand contact to pheophytin a. The [CaMn4O5] cluster site is built by Asp-170 and Glu-189. Residues 197-218 traverse the membrane as a helical segment; it reads FHMLGVAGVFGGSLFSAMHGSL. Residue His-198 participates in chlorophyll a binding. Residues His-215 and 264 to 265 each bind a quinone; that span reads SF. Fe cation is bound at residue His-215. A Fe cation-binding site is contributed by His-272. A helical membrane pass occupies residues 274–288; sequence FLAAWPVIGIWFTAL. [CaMn4O5] cluster-binding residues include His-332, Glu-333, Asp-342, and Ala-344. Residues 345-360 constitute a propeptide that is removed on maturation; that stretch reads AGEVAPVALTAPAING.

It belongs to the reaction center PufL/M/PsbA/D family. As to quaternary structure, PSII is composed of 1 copy each of membrane proteins PsbA, PsbB, PsbC, PsbD, PsbE, PsbF, PsbH, PsbI, PsbJ, PsbK, PsbL, PsbM, PsbT, PsbX, PsbY, PsbZ, Psb30/Ycf12, peripheral proteins PsbO, CyanoQ (PsbQ), PsbU, PsbV and a large number of cofactors. It forms dimeric complexes. The D1/D2 heterodimer binds P680, chlorophylls that are the primary electron donor of PSII, and subsequent electron acceptors. It shares a non-heme iron and each subunit binds pheophytin, quinone, additional chlorophylls, carotenoids and lipids. D1 provides most of the ligands for the Mn4-Ca-O5 cluster of the oxygen-evolving complex (OEC). There is also a Cl(-1) ion associated with D1 and D2, which is required for oxygen evolution. The PSII complex binds additional chlorophylls, carotenoids and specific lipids. serves as cofactor. Post-translationally, tyr-161 forms a radical intermediate that is referred to as redox-active TyrZ, YZ or Y-Z. In terms of processing, C-terminally processed by CtpA; processing is essential to allow assembly of the oxygen-evolving complex and thus photosynthetic growth.

Its subcellular location is the cellular thylakoid membrane. The catalysed reaction is 2 a plastoquinone + 4 hnu + 2 H2O = 2 a plastoquinol + O2. Functionally, photosystem II (PSII) is a light-driven water:plastoquinone oxidoreductase that uses light energy to abstract electrons from H(2)O, generating O(2) and a proton gradient subsequently used for ATP formation. It consists of a core antenna complex that captures photons, and an electron transfer chain that converts photonic excitation into a charge separation. The D1/D2 (PsbA/PsbD) reaction center heterodimer binds P680, the primary electron donor of PSII as well as several subsequent electron acceptors. The protein is Photosystem II protein D1 3 of Trichormus variabilis (strain ATCC 29413 / PCC 7937) (Anabaena variabilis).